The following is a 131-amino-acid chain: Holo-[acyl-carrier-protein] synthase (131 aa).

Mg(2+) contacts are provided by Asp-8 and Glu-59.

It belongs to the P-Pant transferase superfamily. AcpS family. Mg(2+) is required as a cofactor.

The protein localises to the cytoplasm. The enzyme catalyses apo-[ACP] + CoA = holo-[ACP] + adenosine 3',5'-bisphosphate + H(+). In terms of biological role, transfers the 4'-phosphopantetheine moiety from coenzyme A to a Ser of acyl-carrier-protein. The protein is Holo-[acyl-carrier-protein] synthase of Rickettsia rickettsii (strain Iowa).